Reading from the N-terminus, the 567-residue chain is Urease subunit alpha (567 aa).

Positions Gly129 to Phe567 constitute a Urease domain. 3 residues coordinate Ni(2+): His134, His136, and Lys217. N6-carboxylysine is present on Lys217. His219 contributes to the substrate binding site. The Ni(2+) site is built by His246 and His272. His320 (proton donor) is an active-site residue. Asp360 lines the Ni(2+) pocket.

Belongs to the metallo-dependent hydrolases superfamily. Urease alpha subunit family. In terms of assembly, heterotrimer of UreA (gamma), UreB (beta) and UreC (alpha) subunits. Three heterotrimers associate to form the active enzyme. Ni cation is required as a cofactor. Carboxylation allows a single lysine to coordinate two nickel ions.

It is found in the cytoplasm. It carries out the reaction urea + 2 H2O + H(+) = hydrogencarbonate + 2 NH4(+). It functions in the pathway nitrogen metabolism; urea degradation; CO(2) and NH(3) from urea (urease route): step 1/1. The polypeptide is Urease subunit alpha (Delftia acidovorans (strain DSM 14801 / SPH-1)).